The following is a 119-amino-acid chain: Putative nitrilase-like protein YIL165C (119 aa).

The 82-residue stretch at 1–82 (MKNIAYEGRL…EGLLTAEINT (82 aa)) folds into the CN hydrolase domain. The Proton acceptor role is filled by aspartate 21.

The protein belongs to the carbon-nitrogen hydrolase superfamily. Nitrilase family.

The chain is Putative nitrilase-like protein YIL165C from Saccharomyces cerevisiae (strain ATCC 204508 / S288c) (Baker's yeast).